The following is a 922-amino-acid chain: Pyruvate dehydrogenase E1 component (922 aa).

In terms of assembly, homodimer. Part of an unusual ODH/PDH supercomplex, consisting of AceE (E1), AceF (E2), and Lpd (E3) together with OdhA (E1+E2). Mg(2+) is required as a cofactor. The cofactor is thiamine diphosphate.

The enzyme catalyses N(6)-[(R)-lipoyl]-L-lysyl-[protein] + pyruvate + H(+) = N(6)-[(R)-S(8)-acetyldihydrolipoyl]-L-lysyl-[protein] + CO2. In terms of biological role, is a specific component of the pyruvate dehydrogenase (PDH) complex, that catalyzes the overall conversion of pyruvate to acetyl-CoA and CO(2). AceE has reductase activity with pyruvate but does not react with 2-oxoglutarate. The chain is Pyruvate dehydrogenase E1 component (aceE) from Corynebacterium glutamicum (strain ATCC 13032 / DSM 20300 / JCM 1318 / BCRC 11384 / CCUG 27702 / LMG 3730 / NBRC 12168 / NCIMB 10025 / NRRL B-2784 / 534).